We begin with the raw amino-acid sequence, 689 residues long: Glycine--tRNA ligase beta subunit (689 aa).

It belongs to the class-II aminoacyl-tRNA synthetase family. As to quaternary structure, tetramer of two alpha and two beta subunits.

It is found in the cytoplasm. The enzyme catalyses tRNA(Gly) + glycine + ATP = glycyl-tRNA(Gly) + AMP + diphosphate. The sequence is that of Glycine--tRNA ligase beta subunit (glyS) from Coxiella burnetii (strain RSA 493 / Nine Mile phase I).